The primary structure comprises 554 residues: Urocanate hydratase (554 aa).

Residues 51–52 (GG), glutamine 129, 175–177 (GMG), glutamate 195, 241–242 (NA), 262–266 (QTSAH), 272–273 (YL), and tyrosine 321 each bind NAD(+). The active site involves cysteine 409. Glycine 491 is an NAD(+) binding site.

It belongs to the urocanase family. NAD(+) is required as a cofactor.

It is found in the cytoplasm. It catalyses the reaction 4-imidazolone-5-propanoate = trans-urocanate + H2O. It functions in the pathway amino-acid degradation; L-histidine degradation into L-glutamate; N-formimidoyl-L-glutamate from L-histidine: step 2/3. Its function is as follows. Catalyzes the conversion of urocanate to 4-imidazolone-5-propionate. The chain is Urocanate hydratase from Caulobacter vibrioides (strain ATCC 19089 / CIP 103742 / CB 15) (Caulobacter crescentus).